A 273-amino-acid polypeptide reads, in one-letter code: Dermonecrotic toxin LhSicTox-alphaIA2avi (273 aa).

Residue His-5 is part of the active site. Residues Glu-25 and Asp-27 each contribute to the Mg(2+) site. His-41 acts as the Nucleophile in catalysis. Disulfide bonds link Cys-45–Cys-51 and Cys-47–Cys-190. Asp-85 contributes to the Mg(2+) binding site.

The protein belongs to the arthropod phospholipase D family. Class II subfamily. It depends on Mg(2+) as a cofactor. As to expression, expressed by the venom gland.

The protein localises to the secreted. The catalysed reaction is an N-(acyl)-sphingosylphosphocholine = an N-(acyl)-sphingosyl-1,3-cyclic phosphate + choline. The enzyme catalyses an N-(acyl)-sphingosylphosphoethanolamine = an N-(acyl)-sphingosyl-1,3-cyclic phosphate + ethanolamine. It carries out the reaction a 1-acyl-sn-glycero-3-phosphocholine = a 1-acyl-sn-glycero-2,3-cyclic phosphate + choline. It catalyses the reaction a 1-acyl-sn-glycero-3-phosphoethanolamine = a 1-acyl-sn-glycero-2,3-cyclic phosphate + ethanolamine. Dermonecrotic toxins cleave the phosphodiester linkage between the phosphate and headgroup of certain phospholipids (sphingolipid and lysolipid substrates), forming an alcohol (often choline) and a cyclic phosphate. This toxin acts on sphingomyelin (SM). It may also act on ceramide phosphoethanolamine (CPE), lysophosphatidylcholine (LPC) and lysophosphatidylethanolamine (LPE), but not on lysophosphatidylserine (LPS), and lysophosphatidylglycerol (LPG). It acts by transphosphatidylation, releasing exclusively cyclic phosphate products as second products. Induces dermonecrosis, hemolysis, increased vascular permeability, edema, inflammatory response, and platelet aggregation. The sequence is that of Dermonecrotic toxin LhSicTox-alphaIA2avi from Loxosceles hirsuta (Recluse spider).